The following is a 279-amino-acid chain: Tryptophan 2,3-dioxygenase (279 aa).

Residues Phe-48–His-52, Tyr-110, and Arg-114 contribute to the substrate site. His-237 lines the heme pocket. A substrate-binding site is contributed by Thr-251.

The protein belongs to the tryptophan 2,3-dioxygenase family. In terms of assembly, homotetramer. It depends on heme as a cofactor.

The enzyme catalyses L-tryptophan + O2 = N-formyl-L-kynurenine. It functions in the pathway amino-acid degradation; L-tryptophan degradation via kynurenine pathway; L-kynurenine from L-tryptophan: step 1/2. Its function is as follows. Heme-dependent dioxygenase that catalyzes the oxidative cleavage of the L-tryptophan (L-Trp) pyrrole ring and converts L-tryptophan to N-formyl-L-kynurenine. Catalyzes the oxidative cleavage of the indole moiety. The polypeptide is Tryptophan 2,3-dioxygenase (Ruegeria sp. (strain TM1040) (Silicibacter sp.)).